The chain runs to 287 residues: Putative glutamate--cysteine ligase regulatory subunit (287 aa).

Belongs to the aldo/keto reductase family. Glutamate--cysteine ligase light chain subfamily. In terms of assembly, heterodimer of a catalytic heavy chain and a regulatory light chain.

The protein resides in the cytoplasm. It participates in sulfur metabolism; glutathione biosynthesis; glutathione from L-cysteine and L-glutamate: step 1/2. In Schizosaccharomyces pombe (strain 972 / ATCC 24843) (Fission yeast), this protein is Putative glutamate--cysteine ligase regulatory subunit.